The sequence spans 76 residues: Alpha/kappa-conotoxin-like fe14.2 (76 aa).

A signal peptide spans 1 to 24 (MPSVRSVTCCCLLWMMLSVQLVTP). A propeptide spanning residues 25–39 (GSPGTAQLSGQRTAR) is cleaved from the precursor. 2 disulfides stabilise this stretch: C46-C61 and C50-C63. Residue R64 is modified to Arginine amide. Residues 65 to 76 (GKRDVVSSSMAV) constitute a propeptide that is removed on maturation.

This sequence belongs to the conotoxin J superfamily. As to expression, expressed by the venom duct.

The protein resides in the secreted. Highly inhibits both nicotinic acetylcholine receptors (neuronal (alpha-3/beta-4) and muscular (alpha-1/beta-1/epsilon/delta) subtypes) and the voltage-gated potassium channel Kv1.6/KCNA6 subtype. This Conus ferrugineus (Cone snail) protein is Alpha/kappa-conotoxin-like fe14.2.